Consider the following 389-residue polypeptide: S-adenosylmethionine synthase (389 aa).

Residue His-15 participates in ATP binding. Position 17 (Asp-17) interacts with Mg(2+). Glu-43 serves as a coordination point for K(+). 2 residues coordinate L-methionine: Glu-56 and Gln-99. The segment at 99–109 (QSPDIAQGVNE) is flexible loop. Residues 166-168 (DAK), 234-235 (RF), Asp-243, 249-250 (RK), Ala-266, and Lys-270 contribute to the ATP site. Residue Asp-243 participates in L-methionine binding. Residue Lys-274 participates in L-methionine binding.

It belongs to the AdoMet synthase family. As to quaternary structure, homotetramer; dimer of dimers. Mg(2+) serves as cofactor. Requires K(+) as cofactor.

It is found in the cytoplasm. It catalyses the reaction L-methionine + ATP + H2O = S-adenosyl-L-methionine + phosphate + diphosphate. It participates in amino-acid biosynthesis; S-adenosyl-L-methionine biosynthesis; S-adenosyl-L-methionine from L-methionine: step 1/1. In terms of biological role, catalyzes the formation of S-adenosylmethionine (AdoMet) from methionine and ATP. The overall synthetic reaction is composed of two sequential steps, AdoMet formation and the subsequent tripolyphosphate hydrolysis which occurs prior to release of AdoMet from the enzyme. The polypeptide is S-adenosylmethionine synthase (Neisseria meningitidis serogroup B (strain ATCC BAA-335 / MC58)).